Here is an 81-residue protein sequence, read N- to C-terminus: Keratin-associated protein 19-3 (81 aa).

The protein belongs to the KRTAP type 19 family. As to quaternary structure, interacts with hair keratins.

In the hair cortex, hair keratin intermediate filaments are embedded in an interfilamentous matrix, consisting of hair keratin-associated proteins (KRTAP), which are essential for the formation of a rigid and resistant hair shaft through their extensive disulfide bond cross-linking with abundant cysteine residues of hair keratins. The matrix proteins include the high-sulfur and high-glycine-tyrosine keratins. This is Keratin-associated protein 19-3 (KRTAP19-3) from Homo sapiens (Human).